The following is a 279-amino-acid chain: Oxygen-dependent coproporphyrinogen-III oxidase (279 aa).

Residue S102 coordinates substrate. Positions 106 and 116 each coordinate a divalent metal cation. H116 acts as the Proton donor in catalysis. 118–120 (NTR) is a substrate binding site. Residues H149 and H179 each contribute to the a divalent metal cation site. An important for dimerization region spans residues 244 to 279 (YVEFNLLYDRGTKFGLMTDGNIEAILMSLPPVVKFN).

The protein belongs to the aerobic coproporphyrinogen-III oxidase family. As to quaternary structure, homodimer. The cofactor is a divalent metal cation.

It localises to the cytoplasm. The enzyme catalyses coproporphyrinogen III + O2 + 2 H(+) = protoporphyrinogen IX + 2 CO2 + 2 H2O. It functions in the pathway porphyrin-containing compound metabolism; protoporphyrin-IX biosynthesis; protoporphyrinogen-IX from coproporphyrinogen-III (O2 route): step 1/1. Functionally, involved in the heme biosynthesis. Catalyzes the aerobic oxidative decarboxylation of propionate groups of rings A and B of coproporphyrinogen-III to yield the vinyl groups in protoporphyrinogen-IX. The polypeptide is Oxygen-dependent coproporphyrinogen-III oxidase (Rickettsia typhi (strain ATCC VR-144 / Wilmington)).